The primary structure comprises 323 residues: Probable cell division protein WhiA (323 aa).

Residues 279-313 (TLKELGEMVSGGKISKSGINHRLRKLDEIAERLRA) constitute a DNA-binding region (H-T-H motif).

Belongs to the WhiA family.

Its function is as follows. Involved in cell division and chromosome segregation. In Anoxybacillus flavithermus (strain DSM 21510 / WK1), this protein is Probable cell division protein WhiA.